A 369-amino-acid polypeptide reads, in one-letter code: Isopentenyl-diphosphate delta-isomerase (369 aa).

9–10 contacts substrate; sequence RK. FMN is bound by residues Thr-65, 66–68, Ser-96, and Asn-125; that span reads GMT. Residue 96 to 98 participates in substrate binding; sequence SQR. Gln-160 is a substrate binding site. Position 161 (Glu-161) interacts with Mg(2+). FMN is bound by residues Lys-193, Ser-218, Thr-223, 275–277, and 296–297; these read GVR and AL.

This sequence belongs to the IPP isomerase type 2 family. As to quaternary structure, homooctamer. Dimer of tetramers. FMN serves as cofactor. The cofactor is NADPH. Mg(2+) is required as a cofactor.

The protein localises to the cytoplasm. It catalyses the reaction isopentenyl diphosphate = dimethylallyl diphosphate. In terms of biological role, involved in the biosynthesis of isoprenoids. Catalyzes the 1,3-allylic rearrangement of the homoallylic substrate isopentenyl (IPP) to its allylic isomer, dimethylallyl diphosphate (DMAPP). The chain is Isopentenyl-diphosphate delta-isomerase from Sulfurisphaera tokodaii (strain DSM 16993 / JCM 10545 / NBRC 100140 / 7) (Sulfolobus tokodaii).